Reading from the N-terminus, the 703-residue chain is Elongation factor G (703 aa).

Positions 8–290 constitute a tr-type G domain; the sequence is ARYRNIGICA…AVIEYLPAPT (283 aa). GTP-binding positions include 17-24, 88-92, and 142-145; these read AHVDAGKT, DTPGH, and NKMD.

This sequence belongs to the TRAFAC class translation factor GTPase superfamily. Classic translation factor GTPase family. EF-G/EF-2 subfamily.

It is found in the cytoplasm. In terms of biological role, catalyzes the GTP-dependent ribosomal translocation step during translation elongation. During this step, the ribosome changes from the pre-translocational (PRE) to the post-translocational (POST) state as the newly formed A-site-bound peptidyl-tRNA and P-site-bound deacylated tRNA move to the P and E sites, respectively. Catalyzes the coordinated movement of the two tRNA molecules, the mRNA and conformational changes in the ribosome. The sequence is that of Elongation factor G from Teredinibacter turnerae (strain ATCC 39867 / T7901).